We begin with the raw amino-acid sequence, 122 residues long: Large ribosomal subunit protein bL12 (122 aa).

This sequence belongs to the bacterial ribosomal protein bL12 family. Homodimer. Part of the ribosomal stalk of the 50S ribosomal subunit. Forms a multimeric L10(L12)X complex, where L10 forms an elongated spine to which 2 to 4 L12 dimers bind in a sequential fashion. Binds GTP-bound translation factors.

Its function is as follows. Forms part of the ribosomal stalk which helps the ribosome interact with GTP-bound translation factors. Is thus essential for accurate translation. In Actinobacillus pleuropneumoniae serotype 5b (strain L20), this protein is Large ribosomal subunit protein bL12.